The primary structure comprises 634 residues: Phototropic-responsive NPH3 family protein NPY2 (634 aa).

Positions 29–97 (SDISVDVEGS…CYGMTVTLSA (69 aa)) constitute a BTB domain. The NPH3 domain occupies 207–488 (DWWVEDLCEL…VQVLFFEQVR (282 aa)). Position 429 is a phosphotyrosine (tyrosine 429). 2 disordered regions span residues 492–517 (SSGS…YGSS) and 584–634 (QLQS…VSVS). Over residues 588-602 (KGGGEKNNGGGGGGS) the composition is skewed to gly residues. The span at 619 to 634 (KTATPSRNLTRRVSVS) shows a compositional bias: polar residues.

It belongs to the NPH3 family. In terms of tissue distribution, specifically expressed in the hypophysis and the root meristems in the embryos. Highly expressed in primary root tips and radicles.

The protein resides in the cell membrane. The protein localises to the cytoplasm. It localises to the cytosol. It functions in the pathway protein modification; protein ubiquitination. In terms of biological role, may act as a substrate-specific adapter of an E3 ubiquitin-protein ligase complex (CUL3-RBX1-BTB) which mediates the ubiquitination and subsequent proteasomal degradation of target proteins. Plays an essential role in auxin-mediated organogenesis and in root gravitropic responses through the control of PIN proteins (e.g. PIN1 and PIN2) polarity in the root tip endodermal cell layer and in shoot epidermis. Recruited to the plasma membrane by PINs (e.g. PIN1 and PIN2) and, in concert with AGC kinases-mediated (e.g. D6PK and PID) PINs phosphorylation, maintains their polarity through limiting lateral diffusion-based escape. The chain is Phototropic-responsive NPH3 family protein NPY2 from Arabidopsis thaliana (Mouse-ear cress).